The sequence spans 498 residues: MSAPEGPSKCTWTPNTTENTPHTTRRTPKKLIMDNILDNIGGTPLVRVNKVSSDLECELVAKCEFFNAGGSVKDRIGHRMIVDAEESGRIKKGDTLIEPTSGNTGIGLALTAAIKGYKMIITLPEKMSQEKVDVLKALGAEIIRTPTEAAFDAPESHIGVAKKLNSEIPNSHILDQYGNPSNPLAHYDGTAEELLEQCEGKIDMIVCTAGTGGTITGIARKIKERLPNCIVVGVDPHGSILAQPESLNNTNKSYKIEGIGYDFIPNVLERKLVDQWIKTDDKESFIMARRLIKEEGLLCGGSSGSAMVGALLAAKQLKKGQRCVVLLADSIRNYMTKHLNDDWLVDNGFVDPEYKTKDQQEEEKYHGATVKDLTLPKPITISATTTCAAAVQLLQQYGFDQLPVVSESKKVLGQLTLGNLLSHIASKKAVPTDAVSKVMFRFTKNEKYIPITQSTSLATLSKFFENHSSAIVTENDEIISIVTKIDLLTYLMKSQQKN.

Positions 1–25 are disordered; that stretch reads MSAPEGPSKCTWTPNTTENTPHTTR. A compositionally biased stretch (low complexity) spans 11–22; sequence TWTPNTTENTPH. Lys73 carries the N6-(pyridoxal phosphate)lysine modification. Pyridoxal 5'-phosphate-binding positions include Asn103, 210–214, and Ser302; that span reads GTGGT. CBS domains lie at 374–430 and 435–497; these read TLPK…KKAV and VSKV…SQQK.

Belongs to the cysteine synthase/cystathionine beta-synthase family. The cofactor is pyridoxal 5'-phosphate.

The catalysed reaction is L-homocysteine + L-serine = L,L-cystathionine + H2O. Its pathway is amino-acid biosynthesis; L-cysteine biosynthesis; L-cysteine from L-homocysteine and L-serine: step 1/2. The sequence is that of Cystathionine beta-synthase (cysB) from Dictyostelium discoideum (Social amoeba).